The primary structure comprises 431 residues: MVSLEKNDRLMLARQLPLKSVALILAGGRGTRLKDLTNKRAKPAVHFGGKFRIIDFALSNCLNSGIRRIGVITQYQSHTLVQHIQRGWSLFSEEMNEFVDLLPAQQRMQGENWYRGTADAVTQNLDIIRRYKAEYVVILAGDHIYKQDYSRMLIDHVEKGARCTVACMPVPIKEATAFGVMAVDESEKIIDFVEKPANPPAMPGDDSKALASMGIYVFDADYLYELLAADDKDDASSHDFGKDIIPKITREGMAYAHPFPLSCVQSDPDAEPYWRDVGTLEAYWKANLDLASVTPELDMYDQNWPIRTHMESLPPAKFVQDRSGSHGMTLNSLVSGGCIISGSVVVQSVLFPRVRINSFCNIDSAVLLPEVWVGRSCRLRRCIIDRACIIPEGMVIGENAEEDARRFYRSEEGIVLVTREMLRKLQVKQER.

Beta-D-fructose 1,6-bisphosphate is bound at residue K39. Residues R40, H46, and R52 each contribute to the AMP site. Y114 contacts alpha-D-glucose 1-phosphate. Position 130 (R130) interacts with AMP. Alpha-D-glucose 1-phosphate is bound by residues G179, 194 to 195 (EK), and S212. AMP-binding residues include E370 and R386. Residues 419–423 (REMLR) and 429–431 (QER) contribute to the beta-D-fructose 1,6-bisphosphate site.

Belongs to the bacterial/plant glucose-1-phosphate adenylyltransferase family. As to quaternary structure, homotetramer.

It catalyses the reaction alpha-D-glucose 1-phosphate + ATP + H(+) = ADP-alpha-D-glucose + diphosphate. The protein operates within glycan biosynthesis; glycogen biosynthesis. With respect to regulation, allosterically activated by fructose-1,6-bisphosphate (F16BP) and inhibited by AMP. Functionally, involved in the biosynthesis of ADP-glucose, a building block required for the elongation reactions to produce glycogen. Catalyzes the reaction between ATP and alpha-D-glucose 1-phosphate (G1P) to produce pyrophosphate and ADP-Glc. This is Glucose-1-phosphate adenylyltransferase from Salmonella arizonae (strain ATCC BAA-731 / CDC346-86 / RSK2980).